A 212-amino-acid chain; its full sequence is ECF RNA polymerase sigma factor SigD (212 aa).

The tract at residues 49–119 (ETIRPIVVRY…VADAHRAAGR (71 aa)) is sigma-70 factor domain-2. Residues 75–78 (DVAQ) carry the Polymerase core binding motif. The interval 152 to 201 (NELLEILPAKQREILILRVVVGLSAEETAAAVGSTTGAVRVAQHRALQRL) is sigma-70 factor domain-4. The H-T-H motif DNA-binding region spans 176–195 (AEETAAAVGSTTGAVRVAQH).

It belongs to the sigma-70 factor family. ECF subfamily. In terms of assembly, interacts transiently with the RNA polymerase catalytic core formed by RpoA, RpoB, RpoC and RpoZ (2 alpha, 1 beta, 1 beta' and 1 omega subunit) to form the RNA polymerase holoenzyme that can initiate transcription. Interacts (via sigma-70 factor domain 4) with RsdA.

Its function is as follows. Sigma factors are initiation factors that promote the attachment of RNA polymerase to specific initiation sites and are then released. Extracytoplasmic function (ECF) sigma factors are held in an inactive form by an anti-sigma factor until released by regulated intramembrane proteolysis. This Mycobacterium bovis (strain ATCC BAA-935 / AF2122/97) protein is ECF RNA polymerase sigma factor SigD (sigD).